Here is a 346-residue protein sequence, read N- to C-terminus: tRNA N6-adenosine threonylcarbamoyltransferase (346 aa).

Histidine 111 and histidine 115 together coordinate Fe cation. Substrate-binding positions include 134-138 (LVSGG), aspartate 167, glycine 180, and asparagine 279. Aspartate 307 provides a ligand contact to Fe cation.

This sequence belongs to the KAE1 / TsaD family. It depends on Fe(2+) as a cofactor.

Its subcellular location is the cytoplasm. It carries out the reaction L-threonylcarbamoyladenylate + adenosine(37) in tRNA = N(6)-L-threonylcarbamoyladenosine(37) in tRNA + AMP + H(+). Required for the formation of a threonylcarbamoyl group on adenosine at position 37 (t(6)A37) in tRNAs that read codons beginning with adenine. Is involved in the transfer of the threonylcarbamoyl moiety of threonylcarbamoyl-AMP (TC-AMP) to the N6 group of A37, together with TsaE and TsaB. TsaD likely plays a direct catalytic role in this reaction. This is tRNA N6-adenosine threonylcarbamoyltransferase from Burkholderia ambifaria (strain MC40-6).